Consider the following 431-residue polypeptide: Enolase (431 aa).

Q163 contributes to the (2R)-2-phosphoglycerate binding site. The active-site Proton donor is E205. Mg(2+) contacts are provided by D242, E288, and D315. (2R)-2-phosphoglycerate-binding residues include K340, R369, S370, and K391. The active-site Proton acceptor is the K340.

Belongs to the enolase family. Mg(2+) serves as cofactor.

It localises to the cytoplasm. It is found in the secreted. Its subcellular location is the cell surface. It carries out the reaction (2R)-2-phosphoglycerate = phosphoenolpyruvate + H2O. The protein operates within carbohydrate degradation; glycolysis; pyruvate from D-glyceraldehyde 3-phosphate: step 4/5. Functionally, catalyzes the reversible conversion of 2-phosphoglycerate (2-PG) into phosphoenolpyruvate (PEP). It is essential for the degradation of carbohydrates via glycolysis. This is Enolase from Trichlorobacter lovleyi (strain ATCC BAA-1151 / DSM 17278 / SZ) (Geobacter lovleyi).